Consider the following 441-residue polypeptide: Probable pyridine nucleotide-disulfide oxidoreductase RclA (441 aa).

33–43 (EQSNAMYGGTC) contacts FAD. Cys43 and Cys48 are oxidised to a cystine. His426 functions as the Proton acceptor in the catalytic mechanism.

Belongs to the class-I pyridine nucleotide-disulfide oxidoreductase family. Requires FAD as cofactor.

Functionally, probably involved in reactive chlorine species (RCS) stress resistance. This is Probable pyridine nucleotide-disulfide oxidoreductase RclA (rclA) from Escherichia coli (strain K12).